A 217-amino-acid chain; its full sequence is Glycerol-3-phosphate acyltransferase (217 aa).

5 helical membrane-spanning segments follow: residues 1–21 (MAWA…SIPT), 54–74 (TAAI…VGGV), 84–104 (AIVP…AAIL), 126–146 (VLLV…LFML), and 165–185 (LLML…LAGI).

This sequence belongs to the PlsY family. As to quaternary structure, probably interacts with PlsX.

It is found in the cell inner membrane. It carries out the reaction an acyl phosphate + sn-glycerol 3-phosphate = a 1-acyl-sn-glycero-3-phosphate + phosphate. It functions in the pathway lipid metabolism; phospholipid metabolism. Its function is as follows. Catalyzes the transfer of an acyl group from acyl-phosphate (acyl-PO(4)) to glycerol-3-phosphate (G3P) to form lysophosphatidic acid (LPA). This enzyme utilizes acyl-phosphate as fatty acyl donor, but not acyl-CoA or acyl-ACP. The polypeptide is Glycerol-3-phosphate acyltransferase (Rippkaea orientalis (strain PCC 8801 / RF-1) (Cyanothece sp. (strain PCC 8801))).